Here is a 332-residue protein sequence, read N- to C-terminus: Ketol-acid reductoisomerase (NADP(+)) 1 (332 aa).

A KARI N-terminal Rossmann domain is found at 2–182 (AELFYDADAD…GGTRAGVIKT (181 aa)). NADP(+) contacts are provided by residues 25–28 (YGSQ), Ser-51, Ser-53, and 83–86 (DPIQ). His-108 is an active-site residue. Gly-134 lines the NADP(+) pocket. The region spanning 183 to 328 (TFTEETETDL…KELRKLMSWV (146 aa)) is the KARI C-terminal knotted domain. Asp-191, Glu-195, Glu-227, and Glu-231 together coordinate Mg(2+). Ser-252 is a binding site for substrate.

It belongs to the ketol-acid reductoisomerase family. Mg(2+) is required as a cofactor.

It catalyses the reaction (2R)-2,3-dihydroxy-3-methylbutanoate + NADP(+) = (2S)-2-acetolactate + NADPH + H(+). The enzyme catalyses (2R,3R)-2,3-dihydroxy-3-methylpentanoate + NADP(+) = (S)-2-ethyl-2-hydroxy-3-oxobutanoate + NADPH + H(+). It functions in the pathway amino-acid biosynthesis; L-isoleucine biosynthesis; L-isoleucine from 2-oxobutanoate: step 2/4. Its pathway is amino-acid biosynthesis; L-valine biosynthesis; L-valine from pyruvate: step 2/4. Functionally, involved in the biosynthesis of branched-chain amino acids (BCAA). Catalyzes an alkyl-migration followed by a ketol-acid reduction of (S)-2-acetolactate (S2AL) to yield (R)-2,3-dihydroxy-isovalerate. In the isomerase reaction, S2AL is rearranged via a Mg-dependent methyl migration to produce 3-hydroxy-3-methyl-2-ketobutyrate (HMKB). In the reductase reaction, this 2-ketoacid undergoes a metal-dependent reduction by NADPH to yield (R)-2,3-dihydroxy-isovalerate. The protein is Ketol-acid reductoisomerase (NADP(+)) 1 of Streptomyces coelicolor (strain ATCC BAA-471 / A3(2) / M145).